The sequence spans 192 residues: Threonylcarbamoyl-AMP synthase (192 aa).

One can recognise a YrdC-like domain in the interval 5–192 (TTSVAEAAHC…DATTGRVIRD (188 aa)).

It belongs to the SUA5 family. TsaC subfamily.

The protein resides in the cytoplasm. It carries out the reaction L-threonine + hydrogencarbonate + ATP = L-threonylcarbamoyladenylate + diphosphate + H2O. Functionally, required for the formation of a threonylcarbamoyl group on adenosine at position 37 (t(6)A37) in tRNAs that read codons beginning with adenine. Catalyzes the conversion of L-threonine, HCO(3)(-)/CO(2) and ATP to give threonylcarbamoyl-AMP (TC-AMP) as the acyladenylate intermediate, with the release of diphosphate. In Acinetobacter baylyi (strain ATCC 33305 / BD413 / ADP1), this protein is Threonylcarbamoyl-AMP synthase.